A 1076-amino-acid chain; its full sequence is Inositol-1,4,5-trisphosphate 5-phosphatase 1 (1076 aa).

The 331-residue stretch at 144–474 folds into the SAC domain; it reads LRKLLTNGSF…GDALARIYTG (331 aa). Residues 534–880 are catalytic; sequence YDPIHEYVNH…QEVRDASQTS (347 aa). Disordered stretches follow at residues 930–958 and 977–1076; these read AAPP…DWIS and LSPA…KPLV. 2 stretches are compositionally biased toward low complexity: residues 977–1004 and 1025–1040; these read LSPA…IKPN and SGSS…LTPV. Residues 1065 to 1076 are compositionally biased toward polar residues; sequence PEESSISWKPLV.

It belongs to the synaptojanin family. This sequence in the central section; belongs to the inositol 1,4,5-trisphosphate 5-phosphatase family. Mg(2+) is required as a cofactor.

It is found in the cytoplasm. The catalysed reaction is a 1,2-diacyl-sn-glycero-3-phospho-(1D-myo-inositol-4,5-bisphosphate) + H2O = a 1,2-diacyl-sn-glycero-3-phospho-(1D-myo-inositol 4-phosphate) + phosphate. Functionally, controls the cellular levels and subcellular distribution of phosphatidylinositol 3-phosphate and phosphatidylinositol 4,5-bisphosphate. Involved in distinct membrane trafficking and signal transduction pathways. Highly active against a range of soluble and lipid inositol phosphates. Active in dephosphorylating the 5-position of Ins(1,4,5)P3 and Ins(1,3,4,5)P4 and to a lesser extent Ins(1,4,5,6)P4. The enzyme is also active against PI(4,5)P2 presented in sonicated vesicles and Triton mixed micelles, and somewhat less active against PI(3,5)P2 in unilamellar vesicles. Activity against PI(3,5)P2 drops sharply when this substrate is presented in mixed micelles. Also hydrolyzes PIP3 to produce PI(3,4)P2. The protein is Inositol-1,4,5-trisphosphate 5-phosphatase 1 (syj1) of Schizosaccharomyces pombe (strain 972 / ATCC 24843) (Fission yeast).